Reading from the N-terminus, the 258-residue chain is Chaperone protein FaeE (258 aa).

A signal peptide spans 1–34 (MSKRNAVTTFFTNRVTKALGMTLALMMTCQSAMA). Residues 239–258 (KKPAAPEAAKAEKADTAEQK) form a disordered region. Residues 247–258 (AKAEKADTAEQK) show a composition bias toward basic and acidic residues.

This sequence belongs to the periplasmic pilus chaperone family.

The protein resides in the periplasm. Its function is as follows. Mediates assembly of pili by forming soluble multimeric complexes with pili subunits as an intermediate step in the assembly process. This protein is involved in K88 pili assembly. Protects pilin protein from proteolytic degradation by DegP and from premature polymerization. The protein is Chaperone protein FaeE (faeE) of Escherichia coli.